Consider the following 143-residue polypeptide: Hemoglobin subunit alpha (143 aa).

Residues 2-143 (TLSDKDKSTV…VALALAERYR (142 aa)) form the Globin domain. Position 60 (H60) interacts with O2. H89 contacts heme b.

It belongs to the globin family. In terms of assembly, heterotetramer of two alpha chains and two beta chains. Red blood cells.

Involved in oxygen transport from gills to the various peripheral tissues. In Thunnus thynnus (Atlantic bluefin tuna), this protein is Hemoglobin subunit alpha (hba).